Here is a 100-residue protein sequence, read N- to C-terminus: Large ribosomal subunit protein uL23 (100 aa).

It belongs to the universal ribosomal protein uL23 family. As to quaternary structure, part of the 50S ribosomal subunit. Contacts protein L29, and trigger factor when it is bound to the ribosome.

In terms of biological role, one of the early assembly proteins it binds 23S rRNA. One of the proteins that surrounds the polypeptide exit tunnel on the outside of the ribosome. Forms the main docking site for trigger factor binding to the ribosome. The protein is Large ribosomal subunit protein uL23 of Salmonella paratyphi A (strain ATCC 9150 / SARB42).